A 159-amino-acid polypeptide reads, in one-letter code: 3-hydroxyacyl-[acyl-carrier-protein] dehydratase FabZ (159 aa).

His-58 is a catalytic residue.

This sequence belongs to the thioester dehydratase family. FabZ subfamily.

It localises to the cytoplasm. The catalysed reaction is a (3R)-hydroxyacyl-[ACP] = a (2E)-enoyl-[ACP] + H2O. In terms of biological role, involved in unsaturated fatty acids biosynthesis. Catalyzes the dehydration of short chain beta-hydroxyacyl-ACPs and long chain saturated and unsaturated beta-hydroxyacyl-ACPs. The protein is 3-hydroxyacyl-[acyl-carrier-protein] dehydratase FabZ of Helicobacter pylori (strain P12).